Here is a 411-residue protein sequence, read N- to C-terminus: Methylthioribose-1-phosphate isomerase (411 aa).

At Ser-2 the chain carries N-acetylserine. The active-site Proton donor is Asp-280. Residue Ser-351 is modified to Phosphoserine.

Belongs to the eIF-2B alpha/beta/delta subunits family. MtnA subfamily. Homodimer.

The protein localises to the cytoplasm. Its subcellular location is the nucleus. It catalyses the reaction 5-(methylsulfanyl)-alpha-D-ribose 1-phosphate = 5-(methylsulfanyl)-D-ribulose 1-phosphate. It functions in the pathway amino-acid biosynthesis; L-methionine biosynthesis via salvage pathway; L-methionine from S-methyl-5-thio-alpha-D-ribose 1-phosphate: step 1/6. Functionally, catalyzes the interconversion of methylthioribose-1-phosphate (MTR-1-P) into methylthioribulose-1-phosphate (MTRu-1-P). This Saccharomyces cerevisiae (strain JAY291) (Baker's yeast) protein is Methylthioribose-1-phosphate isomerase.